A 375-amino-acid chain; its full sequence is Succinyl-diaminopimelate desuccinylase (375 aa).

His-66 provides a ligand contact to Zn(2+). Asp-68 is an active-site residue. Asp-99 contacts Zn(2+). The active-site Proton acceptor is the Glu-133. Zn(2+) is bound by residues Glu-134, Glu-162, and His-348.

This sequence belongs to the peptidase M20A family. DapE subfamily. In terms of assembly, homodimer. The cofactor is Zn(2+). Requires Co(2+) as cofactor.

It catalyses the reaction N-succinyl-(2S,6S)-2,6-diaminopimelate + H2O = (2S,6S)-2,6-diaminopimelate + succinate. It functions in the pathway amino-acid biosynthesis; L-lysine biosynthesis via DAP pathway; LL-2,6-diaminopimelate from (S)-tetrahydrodipicolinate (succinylase route): step 3/3. In terms of biological role, catalyzes the hydrolysis of N-succinyl-L,L-diaminopimelic acid (SDAP), forming succinate and LL-2,6-diaminopimelate (DAP), an intermediate involved in the bacterial biosynthesis of lysine and meso-diaminopimelic acid, an essential component of bacterial cell walls. The protein is Succinyl-diaminopimelate desuccinylase of Pectobacterium atrosepticum (strain SCRI 1043 / ATCC BAA-672) (Erwinia carotovora subsp. atroseptica).